Reading from the N-terminus, the 283-residue chain is Diaminopimelate epimerase (283 aa).

Residues Asn13, Gln46, and Asn66 each contribute to the substrate site. Cys75 serves as the catalytic Proton donor. Substrate contacts are provided by residues 76–77 (GN), Asn166, Asn199, and 217–218 (ER). The Proton acceptor role is filled by Cys226. 227 to 228 (GT) contributes to the substrate binding site.

This sequence belongs to the diaminopimelate epimerase family. As to quaternary structure, homodimer.

Its subcellular location is the cytoplasm. The enzyme catalyses (2S,6S)-2,6-diaminopimelate = meso-2,6-diaminopimelate. Its pathway is amino-acid biosynthesis; L-lysine biosynthesis via DAP pathway; DL-2,6-diaminopimelate from LL-2,6-diaminopimelate: step 1/1. Functionally, catalyzes the stereoinversion of LL-2,6-diaminopimelate (L,L-DAP) to meso-diaminopimelate (meso-DAP), a precursor of L-lysine and an essential component of the bacterial peptidoglycan. The polypeptide is Diaminopimelate epimerase (Herminiimonas arsenicoxydans).